The sequence spans 390 residues: Homeobox protein Meis1 (390 aa).

The region spanning 108–191 (GGDVCSSESF…PIDLVIDDRD (84 aa)) is the MEIS N-terminal domain. Residues 188 to 202 (DDRDGGSKSDSEDLT) are compositionally biased toward basic and acidic residues. A disordered region spans residues 188–279 (DDRDGGSKSD…KKRNKGRGIF (92 aa)). A DNA-binding region (homeobox; TALE-type) is located at residues 272 to 334 (RNKGRGIFPK…NARRRIVQPM (63 aa)). The interaction with DNA stretch occupies residues 299-329 (YPSEEQKKQLAQDTGLTILQVNNWFINARRR).

This sequence belongs to the TALE/MEIS homeobox family. Interacts with pbx1 isoform b. In the embryo, displays a broad expression pattern with high levels observed in tissues of neural cell fate such as midbrain, hindbrain, dorsal portion of the neural tube, and neural crest-derived branchial arches. Widely expressed in the adult with highest levels in brain and spleen.

It localises to the cytoplasm. It is found in the nucleus. Induces expression of a number of neural crest marker genes as part of a heterodimer with isoform b of pbx1, to specify neural crest cell fate. Binds to a highly conserved region in the promoter of the neural crest marker gene zic3. This Xenopus laevis (African clawed frog) protein is Homeobox protein Meis1 (meis1).